A 122-amino-acid polypeptide reads, in one-letter code: Biogenesis of lysosome-related organelles complex 1 subunit CNL1 (122 aa).

Positions 1–10 (MQDNSSHSRE) are enriched in basic and acidic residues. Residues 1–21 (MQDNSSHSRESASAGDDPLGI) are disordered. Residues 63–95 (ENTIDKNIAKFKELLEKCDTLENHYEMLNQLAI) are a coiled coil.

The protein belongs to the BLOC1S4 family. As to quaternary structure, component of the biogenesis of lysosome-related organelles complex-1 (BLOC-1) composed of at least BLI1, BLS1, CNL1, KXD1, SNN1 and VAB2.

Its subcellular location is the cytoplasm. Component of the biogenesis of lysosome-related organelles complex-1 (BLOC-1), a complex that is involved in endosomal cargo sorting. This Saccharomyces cerevisiae (strain RM11-1a) (Baker's yeast) protein is Biogenesis of lysosome-related organelles complex 1 subunit CNL1 (CLN1).